We begin with the raw amino-acid sequence, 136 residues long: Outer envelope pore protein 16-4, chloroplastic (136 aa).

The tract at residues 1 to 59 (MEEELLSAVPCSSLTVESVLRVATAGGLYGLCAGPRDARKIGLSGVSQASFVAKSIGRF) is contains 4 beta strands. 4 consecutive transmembrane segments (helical) span residues 18 to 34 (SVLRVATAGGLYGLCAG), 56 to 72 (IGRFGFQCGLVSGVFTM), 86 to 102 (WVNALVGGAVAGAAVAI), and 110 to 126 (VVGMAGLVSAFSVLANC).

It belongs to the Tim17/Tim22/Tim23 family. Plastid outer envelope porin OEP16 (TC 1.B.30) subfamily. As to quaternary structure, homodimer and oligomers in membrane.

The protein localises to the plastid. Its subcellular location is the chloroplast outer membrane. Its function is as follows. Voltage-dependent high-conductance channel with a slight cation-selectivity; selective for amino acids but excludes triosephosphates or uncharged sugars. Non-essential amino acid-selective channel protein and translocation pore for NADPH:protochlorophyllide oxidoreductase A (PORA) and possibly PORB. The polypeptide is Outer envelope pore protein 16-4, chloroplastic (OEP164) (Arabidopsis thaliana (Mouse-ear cress)).